The primary structure comprises 153 residues: UPF0756 membrane protein BCQ_4399 (153 aa).

4 helical membrane-spanning segments follow: residues 8–28 (FLFI…TVAI), 54–74 (LGVT…EIGF), 87–107 (WIAL…VQLL), and 117–137 (LVFG…GPLI).

The protein belongs to the UPF0756 family.

Its subcellular location is the cell membrane. This Bacillus cereus (strain Q1) protein is UPF0756 membrane protein BCQ_4399.